The following is a 441-amino-acid chain: Arginine biosynthesis bifunctional protein ArgJ, mitochondrial (441 aa).

Residues 1–8 (MRISSTLL) constitute a mitochondrion transit peptide. Substrate is bound by residues T177, K204, T215, E301, N436, and S441. The active-site Nucleophile is T215.

Belongs to the ArgJ family. Heterodimer of an alpha and a beta chain. In terms of processing, the alpha and beta chains are autoproteolytically processed from a single precursor protein within the mitochondrion.

It is found in the mitochondrion matrix. It catalyses the reaction N(2)-acetyl-L-ornithine + L-glutamate = N-acetyl-L-glutamate + L-ornithine. The catalysed reaction is L-glutamate + acetyl-CoA = N-acetyl-L-glutamate + CoA + H(+). It functions in the pathway amino-acid biosynthesis; L-arginine biosynthesis; L-ornithine and N-acetyl-L-glutamate from L-glutamate and N(2)-acetyl-L-ornithine (cyclic): step 1/1. It participates in amino-acid biosynthesis; L-arginine biosynthesis; N(2)-acetyl-L-ornithine from L-glutamate: step 1/4. Its activity is regulated as follows. Inhibited by ornithine. Functionally, catalyzes two activities which are involved in the cyclic version of arginine biosynthesis: the synthesis of acetylglutamate from glutamate and acetyl-CoA, and of ornithine by transacetylation between acetylornithine and glutamate. This is Arginine biosynthesis bifunctional protein ArgJ, mitochondrial from Saccharomyces cerevisiae (strain ATCC 204508 / S288c) (Baker's yeast).